The sequence spans 301 residues: tRNA-cytidine(32) 2-sulfurtransferase (301 aa).

The PP-loop motif motif lies at 55–60; sequence SGGKDS. Positions 130, 133, and 221 each coordinate [4Fe-4S] cluster.

The protein belongs to the TtcA family. In terms of assembly, homodimer. It depends on Mg(2+) as a cofactor. [4Fe-4S] cluster serves as cofactor.

It localises to the cytoplasm. It catalyses the reaction cytidine(32) in tRNA + S-sulfanyl-L-cysteinyl-[cysteine desulfurase] + AH2 + ATP = 2-thiocytidine(32) in tRNA + L-cysteinyl-[cysteine desulfurase] + A + AMP + diphosphate + H(+). It functions in the pathway tRNA modification. Its function is as follows. Catalyzes the ATP-dependent 2-thiolation of cytidine in position 32 of tRNA, to form 2-thiocytidine (s(2)C32). The sulfur atoms are provided by the cysteine/cysteine desulfurase (IscS) system. The polypeptide is tRNA-cytidine(32) 2-sulfurtransferase (Acinetobacter baumannii (strain SDF)).